A 526-amino-acid polypeptide reads, in one-letter code: Cytochrome P450 monooxygenase 253 (526 aa).

Helical transmembrane passes span 13–33, 115–135, and 306–326; these read IASSTIGQRILLALALGLLLI, FIMAGEILTGGMLIVFTGYGK, and IGAGAETTAASLSVFMLAMTL. Heme is bound at residue Cys-451.

The protein belongs to the cytochrome P450 family. The cofactor is heme.

The protein resides in the membrane. It participates in secondary metabolite biosynthesis. In terms of biological role, cytochrome P450 monooxygenase that is able to use delta(6)-protoilludene as a substrate to produce delta(6)-protoilludene-8-ol. The protein is Cytochrome P450 monooxygenase 253 of Postia placenta (strain ATCC 44394 / Madison 698-R) (Brown rot fungus).